Here is a 752-residue protein sequence, read N- to C-terminus: Multifunctional tryptophan biosynthesis protein (752 aa).

Positions 3–202 (FTLLIDNYDS…IQMKGGKWGG (200 aa)) constitute a Glutamine amidotransferase type-1 domain. L-glutamine is bound at residue 58–60 (GPG). C86 serves as the catalytic Nucleophile; for GATase activity. Position 136–137 (136–137 (SL)) interacts with L-glutamine. Residues H176 and E178 each act as for GATase activity in the active site. The interval 231-495 (ILNRIHAQRL…DTKAFLRSLI (265 aa)) is indole-3-glycerol phosphate synthase. Positions 509 to 752 (LVKICGIRST…VEAFVKAVRG (244 aa)) are N-(5'-phosphoribosyl)anthranilate isomerase.

The catalysed reaction is N-(5-phospho-beta-D-ribosyl)anthranilate = 1-(2-carboxyphenylamino)-1-deoxy-D-ribulose 5-phosphate. The enzyme catalyses 1-(2-carboxyphenylamino)-1-deoxy-D-ribulose 5-phosphate + H(+) = (1S,2R)-1-C-(indol-3-yl)glycerol 3-phosphate + CO2 + H2O. It catalyses the reaction chorismate + L-glutamine = anthranilate + pyruvate + L-glutamate + H(+). It functions in the pathway amino-acid biosynthesis; L-tryptophan biosynthesis; L-tryptophan from chorismate: step 1/5. Its pathway is amino-acid biosynthesis; L-tryptophan biosynthesis; L-tryptophan from chorismate: step 3/5. The protein operates within amino-acid biosynthesis; L-tryptophan biosynthesis; L-tryptophan from chorismate: step 4/5. In terms of biological role, trifunctional enzyme bearing the Gln amidotransferase (GATase) domain of anthranilate synthase, indole-glycerolphosphate synthase, and phosphoribosylanthranilate isomerase activities. The polypeptide is Multifunctional tryptophan biosynthesis protein (TRP1) (Cryptococcus neoformans var. neoformans serotype D (strain JEC21 / ATCC MYA-565) (Filobasidiella neoformans)).